The primary structure comprises 828 residues: Periplasmic nitrate reductase (828 aa).

A signal peptide (tat-type signal) is located at residues 1–31 (MKLSRRGFMKANAVAAAAAAAGLSVPGVARA). Positions 39 to 95 (IKWDKAPCRFCGTGCGVLVGTQQGRVVACQGDPDAPVNRGLNCIKGYFLPKIMYGED) constitute a 4Fe-4S Mo/W bis-MGD-type domain. Cys46, Cys49, Cys53, and Cys81 together coordinate [4Fe-4S] cluster. Mo-bis(molybdopterin guanine dinucleotide) contacts are provided by residues Lys83, Gln150, Asn175, Cys179, 212–219 (WGANMAEM), 243–247 (STYQH), 262–264 (QSD), Met372, Gln376, Asn482, 508–509 (SD), Lys531, Asp558, and 718–727 (TGRVLEHWHT). Phe794 contacts substrate. Mo-bis(molybdopterin guanine dinucleotide) is bound by residues Asn802 and Lys819.

Belongs to the prokaryotic molybdopterin-containing oxidoreductase family. NasA/NapA/NarB subfamily. As to quaternary structure, component of the periplasmic nitrate reductase NapAB complex composed of NapA and NapB. The cofactor is [4Fe-4S] cluster. Requires Mo-bis(molybdopterin guanine dinucleotide) as cofactor. Post-translationally, predicted to be exported by the Tat system. The position of the signal peptide cleavage has not been experimentally proven.

It is found in the periplasm. It carries out the reaction 2 Fe(II)-[cytochrome] + nitrate + 2 H(+) = 2 Fe(III)-[cytochrome] + nitrite + H2O. In terms of biological role, catalytic subunit of the periplasmic nitrate reductase complex NapAB. Receives electrons from NapB and catalyzes the reduction of nitrate to nitrite. This Shigella dysenteriae serotype 1 (strain Sd197) protein is Periplasmic nitrate reductase.